Reading from the N-terminus, the 313-residue chain is Protein-methionine-sulfoxide reductase catalytic subunit MsrP (313 aa).

The tat-type signal signal peptide spans 1–44 (MARWRPDMAEREATPEALYLRRRDFLALGAAGAVGLLLPRGARA). Residues Asn-76, 79–80 (YE), Cys-134, Thr-169, Asn-217, Arg-222, and 233–235 (GAK) contribute to the Mo-molybdopterin site.

The protein belongs to the MsrP family. In terms of assembly, heterodimer of a catalytic subunit (MsrP) and a heme-binding subunit (MsrQ). It depends on Mo-molybdopterin as a cofactor. Predicted to be exported by the Tat system. The position of the signal peptide cleavage has not been experimentally proven.

Its subcellular location is the periplasm. It catalyses the reaction L-methionyl-[protein] + a quinone + H2O = L-methionyl-(S)-S-oxide-[protein] + a quinol. It carries out the reaction L-methionyl-[protein] + a quinone + H2O = L-methionyl-(R)-S-oxide-[protein] + a quinol. Part of the MsrPQ system that repairs oxidized periplasmic proteins containing methionine sulfoxide residues (Met-O), using respiratory chain electrons. Thus protects these proteins from oxidative-stress damage caused by reactive species of oxygen and chlorine generated by the host defense mechanisms. MsrPQ is essential for the maintenance of envelope integrity under bleach stress, rescuing a wide series of structurally unrelated periplasmic proteins from methionine oxidation. The catalytic subunit MsrP is non-stereospecific, being able to reduce both (R-) and (S-) diastereoisomers of methionine sulfoxide. This Anaeromyxobacter dehalogenans (strain 2CP-1 / ATCC BAA-258) protein is Protein-methionine-sulfoxide reductase catalytic subunit MsrP.